Here is a 340-residue protein sequence, read N- to C-terminus: Ava biosynthesis cluster protein G (340 aa).

The next 4 membrane-spanning stretches (helical) occupy residues 15–35, 81–101, 118–138, and 148–168; these read WSAF…NIWN, FMIS…LQFV, AFFV…VHAF, and LSIM…FLCI. An N-linked (GlcNAc...) asparagine glycan is attached at Asn-171. The next 2 membrane-spanning stretches (helical) occupy residues 219-239 and 315-335; these read FSSV…YVAF and SALT…WLQI.

The protein resides in the membrane. It participates in secondary metabolite biosynthesis. Its function is as follows. Part of the cluster that mediates the biosynthesis of a highly modified cyclo-arginine-tryptophan dipeptide (cRW). The first step of the pathway is perfornmed by the arginine-containing cyclodipeptide synthase (RCPDS) avaA that acts as the scaffold-generating enzyme and is responsible for formation of the cyclo-Arg-Trp (cRW) diketopiperazine. AvaB then acts as a multifunctional flavoenzyme that is responsible for generating the cyclo-Arg-formylkynurenine DKP, which can be deformylated by avaC. AvaB then further catalyzes an additional N-oxidation followed by cyclization and dehydration. The next step is an N-acetylation of the guanidine group catalyzed by the arginine N-acetyltransferase avaD. The roles of the additional enzymes identified within the ava cluster still have to be determined. The polypeptide is Ava biosynthesis cluster protein G (Aspergillus versicolor).